Consider the following 316-residue polypeptide: Methionyl-tRNA formyltransferase (316 aa).

112–115 (SLLP) lines the (6S)-5,6,7,8-tetrahydrofolate pocket.

It belongs to the Fmt family.

The enzyme catalyses L-methionyl-tRNA(fMet) + (6R)-10-formyltetrahydrofolate = N-formyl-L-methionyl-tRNA(fMet) + (6S)-5,6,7,8-tetrahydrofolate + H(+). Attaches a formyl group to the free amino group of methionyl-tRNA(fMet). The formyl group appears to play a dual role in the initiator identity of N-formylmethionyl-tRNA by promoting its recognition by IF2 and preventing the misappropriation of this tRNA by the elongation apparatus. This chain is Methionyl-tRNA formyltransferase, found in Actinobacillus pleuropneumoniae serotype 5b (strain L20).